The primary structure comprises 167 residues: Ribosome maturation factor RimM (167 aa).

One can recognise a PRC barrel domain in the interval 94-166 (DDRAWLHELE…YIHVPRFDEF (73 aa)).

This sequence belongs to the RimM family. In terms of assembly, binds ribosomal protein uS19.

It is found in the cytoplasm. Its function is as follows. An accessory protein needed during the final step in the assembly of 30S ribosomal subunit, possibly for assembly of the head region. Essential for efficient processing of 16S rRNA. May be needed both before and after RbfA during the maturation of 16S rRNA. It has affinity for free ribosomal 30S subunits but not for 70S ribosomes. This is Ribosome maturation factor RimM from Chlorobium luteolum (strain DSM 273 / BCRC 81028 / 2530) (Pelodictyon luteolum).